Here is a 513-residue protein sequence, read N- to C-terminus: ATP synthase subunit alpha (513 aa).

G169–T176 provides a ligand contact to ATP.

It belongs to the ATPase alpha/beta chains family. F-type ATPases have 2 components, CF(1) - the catalytic core - and CF(0) - the membrane proton channel. CF(1) has five subunits: alpha(3), beta(3), gamma(1), delta(1), epsilon(1). CF(0) has three main subunits: a(1), b(2) and c(9-12). The alpha and beta chains form an alternating ring which encloses part of the gamma chain. CF(1) is attached to CF(0) by a central stalk formed by the gamma and epsilon chains, while a peripheral stalk is formed by the delta and b chains.

It localises to the cell inner membrane. It carries out the reaction ATP + H2O + 4 H(+)(in) = ADP + phosphate + 5 H(+)(out). Functionally, produces ATP from ADP in the presence of a proton gradient across the membrane. The alpha chain is a regulatory subunit. This is ATP synthase subunit alpha from Escherichia coli O81 (strain ED1a).